Here is a 488-residue protein sequence, read N- to C-terminus: RNA binding exosome specificity factor Mmi1 (488 aa).

Composition is skewed to polar residues over residues Met-1–Ser-14, Leu-33–Thr-47, and Ser-54–Ser-66. 2 disordered regions span residues Met-1 to Asn-20 and Arg-25 to Ile-80. The span at Pro-71 to Ile-80 shows a compositional bias: basic and acidic residues. The segment at Gly-95–Ser-122 is interaction with erh1. Disordered regions lie at residues Ser-163–Ala-185 and Ser-225–Ser-261. Thr-176 carries the post-translational modification Phosphothreonine. Phosphoserine is present on residues Ser-178, Ser-230, Ser-231, Ser-261, Ser-263, and Ser-265. The segment covering Ser-289–Ser-299 has biased composition (low complexity). Positions Ser-289–Lys-328 are disordered. Ser-311 is subject to Phosphoserine. Thr-312 is modified (phosphothreonine). The YTH domain occupies Ser-350–Ile-476.

Component of the erh1-mmi1 complex composed of mmi1 and erh1. Interacts (via N-terminus) with erh1 in a 2:2 stoichiometry. Interacts with rrp6.

It localises to the nucleus. Its function is as follows. RNA-binding protein that recognizes and binds N6-methyladenosine (m6A)-containing RNAs, a modification present at internal sites of mRNAs and some non-coding RNAs. Functions alone and as part of the erh1-mmi1 complex, to recruit the CCR4-NOT complex and the NURS complex to target RNAs. Suppresses the meiotic program during vegetative growth and promotes the meiotic program during mating. Binds to DSR (determinant of selective removal) regions in meiotic mRNA, and recruits the NURS complex to targets. Recruitment of NURS complex to target mRNAs promotes mRNA decay by engagement of the nuclear exosome, and formation of heterochromatin islands at meiotic genes silenced by the exosome. Recruitment of the CCR4-NOT complex to target RNAs promotes heterochromatin formation at RNAi-dependent heterochromatin domains (HOODs), including a subset of meiotic genes, lncRNAs and retrotransposons. Recruitment of the CCR4-NOT complex to rDNA promotes rDNA heterochromatin assembly. Promotes non-canonical transcription termination at meiotic genes and prevents lncRNA transcription from invading and repressing adjacent genes. The chain is RNA binding exosome specificity factor Mmi1 (mmi1) from Schizosaccharomyces pombe (strain 972 / ATCC 24843) (Fission yeast).